Consider the following 197-residue polypeptide: Auxin-responsive protein IAA19 (197 aa).

Residues 13 to 17 (LRLGL) carry the EAR-like (transcriptional repression) motif. Over residues 35-47 (MNMTSSGSNSDQC) the composition is skewed to polar residues. Residues 35-67 (MNMTSSGSNSDQCESGVVSSGGDAEKVNDSPAA) form a disordered region. The region spanning 96–184 (LGYVKVSMDG…KRLRIMKRSD (89 aa)) is the PB1 domain.

It belongs to the Aux/IAA family. Homodimers and heterodimers. Interacts with the auxin response factor ARF7.

The protein localises to the nucleus. In terms of biological role, aux/IAA proteins are short-lived transcriptional factors that function as repressors of early auxin response genes at low auxin concentrations. Repression is thought to result from the interaction with auxin response factors (ARFs), proteins that bind to the auxin-responsive promoter element (AuxRE). Formation of heterodimers with ARF proteins may alter their ability to modulate early auxin response genes expression. The protein is Auxin-responsive protein IAA19 (IAA19) of Arabidopsis thaliana (Mouse-ear cress).